A 298-amino-acid chain; its full sequence is Inosose dehydratase (298 aa).

This sequence belongs to the IolE/MocC family. Glutathione serves as cofactor. Requires Co(2+) as cofactor. It depends on Mn(2+) as a cofactor.

The catalysed reaction is scyllo-inosose = 3D-3,5/4-trihydroxycyclohexane-1,2-dione + H2O. The protein operates within polyol metabolism; myo-inositol degradation into acetyl-CoA; acetyl-CoA from myo-inositol: step 2/7. Its function is as follows. Catalyzes the dehydration of inosose (2-keto-myo-inositol, 2KMI or 2,4,6/3,5-pentahydroxycyclohexanone) to 3D-(3,5/4)-trihydroxycyclohexane-1,2-dione (D-2,3-diketo-4-deoxy-epi-inositol). In Bacillus cereus (strain AH820), this protein is Inosose dehydratase.